Consider the following 57-residue polypeptide: uncharacterized protein (57 aa).

The tract at residues 26–57 (VVSTRKRLKQNTNTPPHYDTSEDEDEDNYYNY) is disordered. Over residues 46–57 (SEDEDEDNYYNY) the composition is skewed to acidic residues.

This is an uncharacterized protein from Autographa californica nuclear polyhedrosis virus (AcMNPV).